The chain runs to 481 residues: ATP synthase subunit beta, plastid (481 aa).

162–169 (GGAGVGKT) is a binding site for ATP.

Belongs to the ATPase alpha/beta chains family. F-type ATPases have 2 components, CF(1) - the catalytic core - and CF(0) - the membrane proton channel. CF(1) has five subunits: alpha(3), beta(3), gamma(1), delta(1), epsilon(1). CF(0) has four main subunits: a(1), b(1), b'(1) and c(9-12).

Its subcellular location is the plastid membrane. The enzyme catalyses ATP + H2O + 4 H(+)(in) = ADP + phosphate + 5 H(+)(out). Produces ATP from ADP in the presence of a proton gradient across the membrane. The catalytic sites are hosted primarily by the beta subunits. In Prototheca wickerhamii, this protein is ATP synthase subunit beta, plastid (atpB).